The primary structure comprises 409 residues: Ubiquitin-associated domain-containing protein 1 (409 aa).

N-acetylmethionine is present on Met-1. One can recognise a Ubiquitin-like domain in the interval 14-98 (LRLHICAADG…LLLIKKRAPS (85 aa)). In terms of domain architecture, UBA 1 spans 187–231 (DEDERVDETALRQLTEMGFPESRASKALRLNHMSVPQAMEWLIEH). Residues 235–273 (PAIDTPLPGHAAQAEASAAAATSSSSSEAAVGTSVEDEE) form a disordered region. The segment covering 245–264 (AAQAEASAAAATSSSSSEAA) has biased composition (low complexity). Residues 292-332 (RADARAVISLMEMGFDEKEVIDALRVNNNQQNAACEWLLGD) enclose the UBA 2 domain. The 40-residue stretch at 357–396 (NPVVQLGLTNPKTLLAFEDMLENPLNSTQWMNDPETGPVM) folds into the STI1 domain.

Component of the KPC complex composed of RNF123/KPC1 and UBAC1/KPC2. Interacts (via ubiquitin-like domain) with RNF123. Interacts (via ubiquitin-like and UBA domains) with the proteasome via its N-terminal domain.

It localises to the cytoplasm. The protein operates within protein modification; protein ubiquitination. Non-catalytic component of the KPC complex, a E3 ubiquitin-protein ligase complex that mediates polyubiquitination of target proteins, such as CDKN1B and NFKB1. The KPC complex catalyzes polyubiquitination and proteasome-mediated degradation of CDKN1B during G1 phase of the cell cycle. The KPC complex also acts as a key regulator of the NF-kappa-B signaling by promoting maturation of the NFKB1 component of NF-kappa-B by catalyzing ubiquitination of the NFKB1 p105 precursor. Within the KPC complex, UBAC1 acts as an adapter that promotes the transfer of target proteins that have been polyubiquitinated by RNF123/KPC1 to the 26S proteasome. This Rattus norvegicus (Rat) protein is Ubiquitin-associated domain-containing protein 1 (Ubac1).